Consider the following 714-residue polypeptide: Polyribonucleotide nucleotidyltransferase (714 aa).

Mg(2+)-binding residues include Asp-488 and Asp-494. One can recognise a KH domain in the interval 555–614; sequence PRIEVMNIPTDKIRDVIGSGGKVIREIVEKTGAKINIEDDGTVKIASSNGKEIEAAKKWI. One can recognise an S1 motif domain in the interval 624 to 692; it reads GEIYEGTVVK…ERGKVRLSMK (69 aa).

This sequence belongs to the polyribonucleotide nucleotidyltransferase family. Mg(2+) serves as cofactor.

Its subcellular location is the cytoplasm. The enzyme catalyses RNA(n+1) + phosphate = RNA(n) + a ribonucleoside 5'-diphosphate. In terms of biological role, involved in mRNA degradation. Catalyzes the phosphorolysis of single-stranded polyribonucleotides processively in the 3'- to 5'-direction. This chain is Polyribonucleotide nucleotidyltransferase, found in Brucella ovis (strain ATCC 25840 / 63/290 / NCTC 10512).